The following is a 204-amino-acid chain: UPF0637 protein SAR1080 (204 aa).

The protein belongs to the UPF0637 family.

This is UPF0637 protein SAR1080 from Staphylococcus aureus (strain MRSA252).